Here is a 342-residue protein sequence, read N- to C-terminus: tRNA N6-adenosine threonylcarbamoyltransferase (342 aa).

The Fe cation site is built by His-114 and His-118. Substrate is bound by residues 136–140, Asp-169, Gly-182, Asp-186, and Asn-275; that span reads LVSGG. Asp-301 is a Fe cation binding site.

It belongs to the KAE1 / TsaD family. It depends on Fe(2+) as a cofactor.

It is found in the cytoplasm. The catalysed reaction is L-threonylcarbamoyladenylate + adenosine(37) in tRNA = N(6)-L-threonylcarbamoyladenosine(37) in tRNA + AMP + H(+). Required for the formation of a threonylcarbamoyl group on adenosine at position 37 (t(6)A37) in tRNAs that read codons beginning with adenine. Is involved in the transfer of the threonylcarbamoyl moiety of threonylcarbamoyl-AMP (TC-AMP) to the N6 group of A37, together with TsaE and TsaB. TsaD likely plays a direct catalytic role in this reaction. This is tRNA N6-adenosine threonylcarbamoyltransferase from Streptococcus pyogenes serotype M18 (strain MGAS8232).